A 496-amino-acid polypeptide reads, in one-letter code: Beta-amylase (496 aa).

Alanine 2 carries the N-acetylalanine modification. Residues aspartate 54, histidine 94, and aspartate 102 each coordinate substrate. Glutamate 187 (proton donor) is an active-site residue. 3 residues coordinate substrate: lysine 296, histidine 301, and threonine 343. The active-site Proton acceptor is the glutamate 381. Substrate-binding positions include 382–383 (NA) and arginine 421.

It belongs to the glycosyl hydrolase 14 family. As to quaternary structure, monomer.

It carries out the reaction Hydrolysis of (1-&gt;4)-alpha-D-glucosidic linkages in polysaccharides so as to remove successive maltose units from the non-reducing ends of the chains.. This Glycine max (Soybean) protein is Beta-amylase (BMY1).